A 211-amino-acid chain; its full sequence is Small ribosomal subunit protein uS3 (211 aa).

The 70-residue stretch at 16–85 folds into the KH type-2 domain; sequence IDEYFKTKLV…NPQIEVKQVE (70 aa).

Belongs to the universal ribosomal protein uS3 family. As to quaternary structure, part of the 30S ribosomal subunit.

Binds the lower part of the 30S subunit head. The polypeptide is Small ribosomal subunit protein uS3 (Methanococcus maripaludis (strain C7 / ATCC BAA-1331)).